Consider the following 295-residue polypeptide: F-box protein SKIP24 (295 aa).

The region spanning 19-66 is the F-box; degenerate domain; sequence VKSSTFSYKDLCCISISSRRLFRLSCDDSLWDLLLVHDFPNHIVSASS. 2 coiled-coil regions span residues 82-129 and 167-209; these read REKE…SSLQ and EGRL…ESMK. The segment at 217–245 is disordered; it reads KSIRNGDQGSNGKTKKLKTSINYSGDQVS. Residues 235–245 are compositionally biased toward polar residues; the sequence is TSINYSGDQVS.

In terms of assembly, part of a SCF (ASK-cullin-F-box) protein ligase complex. Interacts with SKP1A/ASK1 and SPK1B/ASK2.

Its pathway is protein modification; protein ubiquitination. Functionally, component of SCF(ASK-cullin-F-box) E3 ubiquitin ligase complexes, which may mediate the ubiquitination and subsequent proteasomal degradation of target proteins. The sequence is that of F-box protein SKIP24 (SKIP24) from Arabidopsis thaliana (Mouse-ear cress).